A 270-amino-acid chain; its full sequence is Flavodoxin/ferredoxin--NADP reductase (270 aa).

Residues 12–113 (VLPDAQTVTS…PKPVGTLVID (102 aa)) enclose the FAD-binding FR-type domain. Residues 62–65 (RAYS), 78–80 (YSI), and 86–88 (PLT) each bind FAD. Position 126 (threonine 126) interacts with NADP(+). Threonine 128 serves as a coordination point for FAD. NADP(+) is bound by residues arginine 156, 192–193 (TR), arginine 201, and aspartate 238. 264–270 (AFVGEGI) is an FAD binding site.

The protein belongs to the ferredoxin--NADP reductase type 1 family. Monomer. It depends on FAD as a cofactor.

The protein localises to the cytoplasm. The catalysed reaction is 2 reduced [2Fe-2S]-[ferredoxin] + NADP(+) + H(+) = 2 oxidized [2Fe-2S]-[ferredoxin] + NADPH. It carries out the reaction reduced [flavodoxin] + NADP(+) = oxidized [flavodoxin] + NADPH + 2 H(+). Its function is as follows. Transports electrons between flavodoxin or ferredoxin and NADPH. This Rhodobacter capsulatus (Rhodopseudomonas capsulata) protein is Flavodoxin/ferredoxin--NADP reductase.